Consider the following 264-residue polypeptide: Glutamate racemase (264 aa).

Substrate-binding positions include 10 to 11 (DS) and 42 to 43 (YG). The active-site Proton donor/acceptor is the Cys-73. 74 to 75 (NT) provides a ligand contact to substrate. Residue Cys-183 is the Proton donor/acceptor of the active site. Substrate is bound at residue 184–185 (TH).

Belongs to the aspartate/glutamate racemases family. As to quaternary structure, homodimer.

It catalyses the reaction L-glutamate = D-glutamate. It participates in cell wall biogenesis; peptidoglycan biosynthesis. In terms of biological role, provides the (R)-glutamate required for cell wall biosynthesis. This Streptococcus pyogenes serotype M1 protein is Glutamate racemase.